We begin with the raw amino-acid sequence, 132 residues long: Small ribosomal subunit protein uS9 (132 aa).

The interval 101-132 (KRAGLLTRDPRMKERKKPGLKAARRSPQFSKR) is disordered. The segment covering 113-132 (KERKKPGLKAARRSPQFSKR) has biased composition (basic residues).

Belongs to the universal ribosomal protein uS9 family.

The protein is Small ribosomal subunit protein uS9 of Staphylococcus aureus (strain USA300).